A 279-amino-acid chain; its full sequence is MTERFDCHHCNESLYGKKYILKEENPHCVACFEELYANTCEECGTPIGCDCKDLSYKDRHWHEGCFHCSRCGSSLVDKPFAAKEEQLLCTDCYSNEYSSKCQECKKTIMPGTRKMEYKGSSWHETCFTCQRCQQPIGTKSFIPKENQNFCVPCYEKQYALQCVQCKKPITTGGVTYRDQPWHRECFVCTACKKQLSGQRFTARDEFPYCLTCFCDLYAKKCAGCTNPISGLGGTKYISFEERQWHNDCFNCKKCSLSLVGRGFLTERDDILCPDCGKDI.

The segment at 7-31 adopts a C4-type zinc-finger fold; the sequence is CHHCNESLYGKKYILKEENPHCVAC. 3 consecutive LIM zinc-binding domains span residues 40-92, 101-153, and 162-212; these read CEEC…CTDC, CQEC…CVPC, and CVQC…CLTC. Residue Lys78 forms a Glycyl lysine isopeptide (Lys-Gly) (interchain with G-Cter in SUMO2) linkage. Glycyl lysine isopeptide (Lys-Gly) (interchain with G-Cter in SUMO2) cross-links involve residues Lys167 and Lys220. The 55-residue stretch at 221-275 folds into the LIM zinc-binding 4 domain; the sequence is CAGCTNPISGLGGTKYISFEERQWHNDCFNCKKCSLSLVGRGFLTERDDILCPDC. Position 238 is a phosphoserine (Ser238).

Interacts with ZNF638 and TTN/titin. Interacts with E4F1. Interacts with GRB7. Interacts with SIRT1 and FOXO1. Interacts with CEFIP and calcineurin. Interacts with FOXK1. Expressed in heart only (at protein level).

It localises to the cytoplasm. It is found in the nucleus. The protein localises to the myofibril. Its subcellular location is the sarcomere. The protein resides in the z line. In terms of biological role, may function as a molecular transmitter linking various signaling pathways to transcriptional regulation. Negatively regulates the transcriptional repressor E4F1 and may function in cell growth. Inhibits the transcriptional activity of FOXO1 and its apoptotic function by enhancing the interaction of FOXO1 with SIRT1 and FOXO1 deacetylation. Negatively regulates the calcineurin/NFAT signaling pathway in cardiomyocytes. This chain is Four and a half LIM domains protein 2 (Fhl2), found in Rattus norvegicus (Rat).